Here is a 625-residue protein sequence, read N- to C-terminus: MNIQKKEVYSFQSEVKQLLHLMIHSLYSNKEIFLRELISNASDAIDKLRFQSISNPELYENDSDFKIQISINKSQGTLIISDNGIGMTRQDVVENLGTIAKSGTKSFIKSLEKKEKNVKNELIGEFGVGFYSSFIVSKKVSVRTRFAGSKSNLGVLWESSGEGEYNITDIKKKTRGTEITLFLKKEEEEFLELWRIEGIVSKYSDHITVPVKIQKYDEKNKIYFWEKINKAKALWTQNKATISEKEYQEFYKHLTNDQNNPLFWSHNHVEGINEYISLLFIPEKAAWDIWNRDNKSGLKLYVKRVYIMDNSQAFLPNYLRFIRGLIDSNNLPLNVSREILQDNSITQNLKKALIKRSLKMLQTLSKKDNEKYQIFWNQFGSVLKEGPAEDSNNLNLIASLLRFTSIQNNSSEQNISLEKYISNMHEKQEKIYYITADSYTSAKNSPHLELFNKKNIDVLLLSDRIDEWMMNYLTEFEGKKFQSISKEDLSLNKLTKENENKKETSTEMIEFLKKVKKTLGDKVKSVRLTYRLTETPCIVLSDSNEMSTQMAKLFSAAGQSVPELKYIFEINPEHKLIQKICKIKENEKFDEWIKLLLDQALFAEKGNLENPHEFIARTNKLILEQ.

Residues 1 to 337 are a; substrate-binding; it reads MNIQKKEVYS…SNNLPLNVSR (337 aa). The segment at 338 to 552 is b; it reads EILQDNSITQ…SNEMSTQMAK (215 aa). The segment at 553 to 625 is c; it reads LFSAAGQSVP…ARTNKLILEQ (73 aa).

It belongs to the heat shock protein 90 family. In terms of assembly, homodimer.

It localises to the cytoplasm. Its function is as follows. Molecular chaperone. Has ATPase activity. This is Chaperone protein HtpG from Buchnera aphidicola subsp. Schizaphis graminum (strain Sg).